The primary structure comprises 269 residues: Indole-3-glycerol phosphate synthase (269 aa).

It belongs to the TrpC family.

It catalyses the reaction 1-(2-carboxyphenylamino)-1-deoxy-D-ribulose 5-phosphate + H(+) = (1S,2R)-1-C-(indol-3-yl)glycerol 3-phosphate + CO2 + H2O. It participates in amino-acid biosynthesis; L-tryptophan biosynthesis; L-tryptophan from chorismate: step 4/5. This chain is Indole-3-glycerol phosphate synthase, found in Rhodococcus opacus (strain B4).